A 343-amino-acid chain; its full sequence is Glyceraldehyde-3-phosphate dehydrogenase (343 aa).

Residues 11–12 (TI) and Gly-110 contribute to the NAD(+) site. 139–141 (SCN) serves as a coordination point for D-glyceraldehyde 3-phosphate. Cys-140 serves as the catalytic Nucleophile. Arg-168 is a binding site for NAD(+). A D-glyceraldehyde 3-phosphate-binding site is contributed by 194–195 (HG). Gln-301 serves as a coordination point for NAD(+).

The protein belongs to the glyceraldehyde-3-phosphate dehydrogenase family. Homotetramer.

The protein localises to the cytoplasm. The enzyme catalyses D-glyceraldehyde 3-phosphate + phosphate + NADP(+) = (2R)-3-phospho-glyceroyl phosphate + NADPH + H(+). It carries out the reaction D-glyceraldehyde 3-phosphate + phosphate + NAD(+) = (2R)-3-phospho-glyceroyl phosphate + NADH + H(+). It participates in carbohydrate degradation; glycolysis; pyruvate from D-glyceraldehyde 3-phosphate: step 1/5. The chain is Glyceraldehyde-3-phosphate dehydrogenase from Methanoregula boonei (strain DSM 21154 / JCM 14090 / 6A8).